The sequence spans 281 residues: Pantothenate synthetase (281 aa).

30–37 contacts ATP; that stretch reads MGYLHEGH. The active-site Proton donor is His-37. (R)-pantoate is bound at residue Gln-61. Residue Gln-61 coordinates beta-alanine. 147-150 is a binding site for ATP; it reads GEKD. Gln-153 provides a ligand contact to (R)-pantoate. ATP is bound by residues Ile-176 and 184 to 187; that span reads KSSR.

It belongs to the pantothenate synthetase family. As to quaternary structure, homodimer.

Its subcellular location is the cytoplasm. It catalyses the reaction (R)-pantoate + beta-alanine + ATP = (R)-pantothenate + AMP + diphosphate + H(+). It functions in the pathway cofactor biosynthesis; (R)-pantothenate biosynthesis; (R)-pantothenate from (R)-pantoate and beta-alanine: step 1/1. Catalyzes the condensation of pantoate with beta-alanine in an ATP-dependent reaction via a pantoyl-adenylate intermediate. In Clostridium botulinum (strain Loch Maree / Type A3), this protein is Pantothenate synthetase.